Here is a 326-residue protein sequence, read N- to C-terminus: Vacuolar protein sorting-associated protein 26A-B (326 aa).

It belongs to the VPS26 family. In terms of assembly, component of the heterotrimeric retromer cargo-selective complex (CSC) which is believed to associate with variable sorting nexins to form functionally distinct retromer complex variants.

It localises to the cytoplasm. Its subcellular location is the endosome membrane. It is found in the early endosome. Functionally, acts as a component of the retromer cargo-selective complex (CSC). The CSC is believed to be the core functional component of retromer or respective retromer complex variants acting to prevent missorting of selected transmembrane cargo proteins into the lysosomal degradation pathway. Retromer mediates retrograde transport of cargo proteins from endosomes to the trans-Golgi network (TGN). The protein is Vacuolar protein sorting-associated protein 26A-B (vps26a-b) of Xenopus laevis (African clawed frog).